Here is a 125-residue protein sequence, read N- to C-terminus: MSWQAYVDDQLVGTGHVIGAAIIGHDGNVWASKNLSLKAGEGAKIVNGFKDSASVLSGGIFVDGQKYLTIKADDKSIYGKKGAGGVVLVKTGQSVLIGHYNETIQPGQATTVVEKLADYLRENGY.

Ser2 is subject to N-acetylserine.

Belongs to the profilin family. As to quaternary structure, occurs in many kinds of cells as a complex with monomeric actin in a 1:1 ratio.

The protein resides in the cytoplasm. The protein localises to the cytoskeleton. Its function is as follows. Binds to actin and affects the structure of the cytoskeleton. At high concentrations, profilin prevents the polymerization of actin, whereas it enhances it at low concentrations. By binding to PIP2, it inhibits the formation of IP3 and DG. This Physarum polycephalum (Slime mold) protein is Profilin-A (PROA).